The chain runs to 271 residues: Tryptophan synthase alpha chain (271 aa).

Catalysis depends on proton acceptor residues E56 and D67.

Belongs to the TrpA family. In terms of assembly, tetramer of two alpha and two beta chains.

It catalyses the reaction (1S,2R)-1-C-(indol-3-yl)glycerol 3-phosphate + L-serine = D-glyceraldehyde 3-phosphate + L-tryptophan + H2O. The protein operates within amino-acid biosynthesis; L-tryptophan biosynthesis; L-tryptophan from chorismate: step 5/5. Its function is as follows. The alpha subunit is responsible for the aldol cleavage of indoleglycerol phosphate to indole and glyceraldehyde 3-phosphate. This Mycolicibacterium paratuberculosis (strain ATCC BAA-968 / K-10) (Mycobacterium paratuberculosis) protein is Tryptophan synthase alpha chain.